The chain runs to 86 residues: Small ribosomal subunit protein uS15 (86 aa).

The tract at residues Met-1–Pro-22 is disordered. Over residues Lys-7–Ser-16 the composition is skewed to basic and acidic residues.

It belongs to the universal ribosomal protein uS15 family. As to quaternary structure, part of the 30S ribosomal subunit. Forms a bridge to the 50S subunit in the 70S ribosome, contacting the 23S rRNA.

Functionally, one of the primary rRNA binding proteins, it binds directly to 16S rRNA where it helps nucleate assembly of the platform of the 30S subunit by binding and bridging several RNA helices of the 16S rRNA. In terms of biological role, forms an intersubunit bridge (bridge B4) with the 23S rRNA of the 50S subunit in the ribosome. This is Small ribosomal subunit protein uS15 from Stenotrophomonas maltophilia (strain R551-3).